Consider the following 66-residue polypeptide: Phylloseptin-H7 (66 aa).

The signal sequence occupies residues 1–22 (MAFLKKSLFLVLFLGLVSLSIC). The propeptide occupies 23-44 (EEEKRETEEEENDQEEDDKSEE). The tract at residues 25-44 (EKRETEEEENDQEEDDKSEE) is disordered. Residues 30-41 (EEEENDQEEDDK) show a composition bias toward acidic residues. Leu65 is modified (leucine amide).

In terms of tissue distribution, expressed by the skin glands.

The protein localises to the secreted. Has antimicrobial activity. This is Phylloseptin-H7 from Pithecopus hypochondrialis (Orange-legged leaf frog).